A 604-amino-acid polypeptide reads, in one-letter code: Serine/threonine-protein phosphatase 2B catalytic subunit A2 (604 aa).

The tract at residues asparagine 21 to threonine 48 is disordered. Position 31 is a phosphothreonine (threonine 31). Over residues serine 35–threonine 48 the composition is skewed to low complexity. Aspartate 144, histidine 146, and aspartate 172 together coordinate Fe cation. Positions 172 and 204 each coordinate Zn(2+). Histidine 205 serves as the catalytic Proton donor. Zn(2+)-binding residues include histidine 253 and histidine 359. The segment at lysine 470 to aspartate 497 is disordered. The span at alanine 480 to serine 489 shows a compositional bias: polar residues. Phosphoserine occurs at positions 489 and 520. The calmodulin-binding stretch occupies residues arginine 501 to arginine 523.

Belongs to the PPP phosphatase family. PP-2B subfamily. Composed of two components (A and B), the A component is the catalytic subunit and the B component confers calcium sensitivity. Requires Fe(3+) as cofactor. Zn(2+) is required as a cofactor.

It carries out the reaction O-phospho-L-seryl-[protein] + H2O = L-seryl-[protein] + phosphate. It catalyses the reaction O-phospho-L-threonyl-[protein] + H2O = L-threonyl-[protein] + phosphate. In terms of biological role, calcium-dependent, calmodulin-stimulated protein phosphatase. This subunit may have a role in the calmodulin activation of calcineurin. This chain is Serine/threonine-protein phosphatase 2B catalytic subunit A2 (CMP2), found in Saccharomyces cerevisiae (strain ATCC 204508 / S288c) (Baker's yeast).